The sequence spans 400 residues: Acetate kinase (400 aa).

Asparagine 7 lines the Mg(2+) pocket. Lysine 14 serves as a coordination point for ATP. Arginine 90 provides a ligand contact to substrate. The Proton donor/acceptor role is filled by aspartate 147. Residues 207–211 (HLGNG), 282–284 (DFR), and 331–335 (GIGEN) each bind ATP. Glutamate 384 is a Mg(2+) binding site.

The protein belongs to the acetokinase family. As to quaternary structure, homodimer. Requires Mg(2+) as cofactor. The cofactor is Mn(2+).

It is found in the cytoplasm. The enzyme catalyses acetate + ATP = acetyl phosphate + ADP. The protein operates within metabolic intermediate biosynthesis; acetyl-CoA biosynthesis; acetyl-CoA from acetate: step 1/2. Catalyzes the formation of acetyl phosphate from acetate and ATP. Can also catalyze the reverse reaction. In Thermoanaerobacterium thermosaccharolyticum (strain ATCC 7956 / DSM 571 / NCIMB 9385 / NCA 3814 / NCTC 13789 / WDCM 00135 / 2032) (Clostridium thermosaccharolyticum), this protein is Acetate kinase.